Reading from the N-terminus, the 153-residue chain is Arginine regulator (153 aa).

This sequence belongs to the ArgR family.

Its subcellular location is the cytoplasm. It functions in the pathway amino-acid degradation; L-arginine degradation via ADI pathway. Functionally, regulates the transcription of the arc operon, involved in arginine catabolism. The chain is Arginine regulator (argR1) from Lactiplantibacillus plantarum (strain ATCC BAA-793 / NCIMB 8826 / WCFS1) (Lactobacillus plantarum).